Consider the following 549-residue polypeptide: Hydroxylamine reductase (549 aa).

[2Fe-2S] cluster is bound by residues cysteine 3, cysteine 6, cysteine 18, and cysteine 25. The hybrid [4Fe-2O-2S] cluster site is built by histidine 248, glutamate 272, cysteine 316, cysteine 404, cysteine 432, cysteine 457, glutamate 491, and lysine 493. A Cysteine persulfide modification is found at cysteine 404.

Belongs to the HCP family. [2Fe-2S] cluster serves as cofactor. Requires hybrid [4Fe-2O-2S] cluster as cofactor.

It localises to the cytoplasm. The catalysed reaction is A + NH4(+) + H2O = hydroxylamine + AH2 + H(+). Functionally, catalyzes the reduction of hydroxylamine to form NH(3) and H(2)O. The protein is Hydroxylamine reductase of Aeromonas hydrophila subsp. hydrophila (strain ATCC 7966 / DSM 30187 / BCRC 13018 / CCUG 14551 / JCM 1027 / KCTC 2358 / NCIMB 9240 / NCTC 8049).